We begin with the raw amino-acid sequence, 488 residues long: MKAIMVVGTTSHAGKSLITTAICRILSRRGWKVTPFKGQNMALNSYVTSTGGEMGHAQAVQAWAAGVTPAIEMNPILLKPQGDMTSQVIIKGKASGTVGAVDYYQQYFDIGWNAIQESLETLSQEFNMIVCEGAGSPAEINLKHRDLTNMRVAKHLNASTILVVDIDRGGAFAHIIGTLELLEPEERNLIKGIVINKFRGQRSLLDSGIHWLEKKTNIPVIGVIPWINEAFPAEDSLSILEQRYNKHTTDITIAIIRLPRISNFTDFEPLEAESSVKIKYIHPNDSLGDPDAIIIPGTKTTINDLLVLQKSGMAEAIKSYQSSGGIVMGICGGFQMLGEVLIDSQGLEGKQGEYKGLELLPLITTITPKKIASQRQVIANYPLGNLPVIGYEIHQGRTIVTKPDIVKPLFNDYDLGFVDSYDSIWGNYLHGIFDNGSWRRSWLNILRHKRGLNSLPTSISNYREQREIILDSIADKVNEHLDLKPVLT.

In terms of domain architecture, GATase cobBQ-type spans aspartate 250–tryptophan 438. Cysteine 331 (nucleophile) is an active-site residue. Residue histidine 430 is part of the active site.

It belongs to the CobB/CobQ family. CobQ subfamily.

It functions in the pathway cofactor biosynthesis; adenosylcobalamin biosynthesis. In terms of biological role, catalyzes amidations at positions B, D, E, and G on adenosylcobyrinic A,C-diamide. NH(2) groups are provided by glutamine, and one molecule of ATP is hydrogenolyzed for each amidation. This Trichodesmium erythraeum (strain IMS101) protein is Cobyric acid synthase.